Reading from the N-terminus, the 303-residue chain is UDP-3-O-acyl-N-acetylglucosamine deacetylase (303 aa).

3 residues coordinate Zn(2+): His78, His237, and Asp241. His264 serves as the catalytic Proton donor.

It belongs to the LpxC family. Zn(2+) serves as cofactor.

It catalyses the reaction a UDP-3-O-[(3R)-3-hydroxyacyl]-N-acetyl-alpha-D-glucosamine + H2O = a UDP-3-O-[(3R)-3-hydroxyacyl]-alpha-D-glucosamine + acetate. It functions in the pathway glycolipid biosynthesis; lipid IV(A) biosynthesis; lipid IV(A) from (3R)-3-hydroxytetradecanoyl-[acyl-carrier-protein] and UDP-N-acetyl-alpha-D-glucosamine: step 2/6. Functionally, catalyzes the hydrolysis of UDP-3-O-myristoyl-N-acetylglucosamine to form UDP-3-O-myristoylglucosamine and acetate, the committed step in lipid A biosynthesis. The polypeptide is UDP-3-O-acyl-N-acetylglucosamine deacetylase (Coxiella burnetii (strain CbuG_Q212) (Coxiella burnetii (strain Q212))).